The primary structure comprises 557 residues: Tektin-5 (557 aa).

Residues 302–386 (DNIRHAQNMR…LLERAIVAKE (85 aa)) adopt a coiled-coil conformation. A run of 6 repeats spans residues 507-512 (CSGSAL), 513-518 (CKGPAS), 519-524 (CGGGAS), 525-530 (CGGGAS), 531-536 (CGGHAP), and 537-541 (CGSAL). The segment at 507 to 541 (CSGSALCKGPASCGGGASCGGGASCGGHAPCGSAL) is 6 X 6 AA approximate tandem repeats of C-[GSK]-G-[GSPH]-A-[SLP].

This sequence belongs to the tektin family. In terms of assembly, microtubule inner protein component of sperm flagellar doublet microtubules. Interacts with TEKT3. In terms of processing, ubiquitinated, leading to its degradation. Deubiquitinated by USP16, promoting its stability. As to expression, strongly expressed in germ cells of the testis (at protein level). Expressed in spermatozoa. Also detected in brain.

Its subcellular location is the cytoplasm. The protein resides in the cytoskeleton. It is found in the flagellum axoneme. Its function is as follows. Sperm-specific microtubule inner protein (MIP) part of the dynein-decorated doublet microtubules (DMTs) in flagellar axoneme. Forms an extensive interaction network in different conformations that reinforces the helix bundle composed by other tektin proteins (TEKT1 to TEKT4) and MIPs to anchor the tektin bundle onto the tubulin wall of A-tubule of the sperm flagellum. This chain is Tektin-5, found in Mus musculus (Mouse).